A 1328-amino-acid polypeptide reads, in one-letter code: Mitogen-activated protein kinase kinase kinase 19 (1328 aa).

Positions 1–19 (MSSMPKPERHAESLLDICH) are enriched in basic and acidic residues. Disordered regions lie at residues 1–28 (MSSMPKPERHAESLLDICHDTNSSPTDL), 44–74 (RSEEFDQDGDCSHSTLVNEEEDPSGGRQDWQ), 344–380 (VREEDIDCHGSKTRKPEEENSQYLSSRKNESSVAKNY), and 524–561 (QENDKHKMNSHRSKLDSKTKTSKKTPQNFVISTEGPIK). The span at 344–361 (VREEDIDCHGSKTRKPEE) shows a compositional bias: basic and acidic residues. The span at 364-377 (SQYLSSRKNESSVA) shows a compositional bias: polar residues. Over residues 524 to 542 (QENDKHKMNSHRSKLDSKT) the composition is skewed to basic and acidic residues. In terms of domain architecture, Protein kinase spans 1061-1324 (WTKGEILGKG…ALQLLKHSFL (264 aa)). Residues 1067–1075 (LGKGAYGTV) and K1089 contribute to the ATP site. D1186 serves as the catalytic Proton acceptor.

Belongs to the protein kinase superfamily. STE Ser/Thr protein kinase family. STE20 subfamily.

The enzyme catalyses L-seryl-[protein] + ATP = O-phospho-L-seryl-[protein] + ADP + H(+). It carries out the reaction L-threonyl-[protein] + ATP = O-phospho-L-threonyl-[protein] + ADP + H(+). This Homo sapiens (Human) protein is Mitogen-activated protein kinase kinase kinase 19 (MAP3K19).